We begin with the raw amino-acid sequence, 278 residues long: Biotin synthase (278 aa).

Residues Met-1–Arg-227 enclose the Radical SAM core domain. [4Fe-4S] cluster contacts are provided by Cys-16, Cys-20, and Cys-23. [2Fe-2S] cluster contacts are provided by Cys-60, Asn-96, and Cys-154.

It belongs to the radical SAM superfamily. Biotin synthase family. As to quaternary structure, homodimer. The cofactor is [4Fe-4S] cluster. [2Fe-2S] cluster is required as a cofactor.

It carries out the reaction (4R,5S)-dethiobiotin + (sulfur carrier)-SH + 2 reduced [2Fe-2S]-[ferredoxin] + 2 S-adenosyl-L-methionine = (sulfur carrier)-H + biotin + 2 5'-deoxyadenosine + 2 L-methionine + 2 oxidized [2Fe-2S]-[ferredoxin]. Its pathway is cofactor biosynthesis; biotin biosynthesis; biotin from 7,8-diaminononanoate: step 2/2. Its function is as follows. Catalyzes the conversion of dethiobiotin (DTB) to biotin by the insertion of a sulfur atom into dethiobiotin via a radical-based mechanism. The chain is Biotin synthase from Campylobacter jejuni subsp. jejuni serotype O:2 (strain ATCC 700819 / NCTC 11168).